The chain runs to 438 residues: Tol-Pal system protein TolB (438 aa).

The first 21 residues, 1-21, serve as a signal peptide directing secretion; it reads MVKRSLLVLALLICLPATLFA.

Belongs to the TolB family. In terms of assembly, the Tol-Pal system is composed of five core proteins: the inner membrane proteins TolA, TolQ and TolR, the periplasmic protein TolB and the outer membrane protein Pal. They form a network linking the inner and outer membranes and the peptidoglycan layer.

The protein resides in the periplasm. In terms of biological role, part of the Tol-Pal system, which plays a role in outer membrane invagination during cell division and is important for maintaining outer membrane integrity. In Desulfosudis oleivorans (strain DSM 6200 / JCM 39069 / Hxd3) (Desulfococcus oleovorans), this protein is Tol-Pal system protein TolB.